The sequence spans 199 residues: Small ribosomal subunit protein uS14m (199 aa).

Positions 28-67 (LSTPAPEPAKPSSEETTESTEPATSVEDAGEPMKEKRITQ) are disordered.

It belongs to the universal ribosomal protein uS14 family. In terms of assembly, component of the mitochondrial ribosome small subunit (28S) which comprises a 12S rRNA and about 30 distinct proteins. Interacts with LIAT1.

Its subcellular location is the mitochondrion. The protein is Small ribosomal subunit protein uS14m (mrps-14) of Caenorhabditis elegans.